We begin with the raw amino-acid sequence, 78 residues long: Lantibiotic cinnamycin (78 aa).

The propeptide occupies 1–59; the sequence is MTASILQQSVVDADFRAALLENPAAFGASAAALPTPVEAQDQASLDFWTKDIAATEAFA. 2 cross-links (beta-methyllanthionine (Cys-Thr)) span residues 60–77 and 64–70; these read CRQSCSFGPFTFVCDGNT and CSFGPFT. Residues 63 to 73 constitute a cross-link (lanthionine (Ser-Cys)); it reads SCSFGPFTFVC. Positions 65 to 78 form a cross-link, lysinoalanine (Ser-Lys); it reads SFGPFTFVCDGNTK. D74 carries the (3R)-3-hydroxyaspartate modification.

The protein belongs to the type B lantibiotic family. In terms of processing, maturation of lantibiotics involves the enzymatic conversion of Thr, and Ser into dehydrated AA and the formation of thioether bonds with cysteine or the formation of dialkylamine bonds with lysine. This is followed by membrane translocation and cleavage of the modified precursor.

Its function is as follows. Can act as inhibitor of the enzyme phospholipase A2, and of the angiotensin-converting enzyme. Shows inhibitory activities against herpes simplex virus and immunopotentiating activities. Its antimicrobial activities are not very pronounced. The polypeptide is Lantibiotic cinnamycin (cinA) (Streptomyces griseoverticillatus (Streptoverticillium griseoverticillatum)).